Here is a 481-residue protein sequence, read N- to C-terminus: Glutamate--tRNA ligase (481 aa).

The 'HIGH' region signature appears at 9–19 (PSPTGNLHIGT). The Zn(2+) site is built by Cys98, Cys100, His125, and Asp127. The 'KMSKS' region motif lies at 248–252 (KLSKR). Lys251 contributes to the ATP binding site.

Belongs to the class-I aminoacyl-tRNA synthetase family. Glutamate--tRNA ligase type 1 subfamily. As to quaternary structure, monomer. The cofactor is Zn(2+).

It localises to the cytoplasm. The catalysed reaction is tRNA(Glu) + L-glutamate + ATP = L-glutamyl-tRNA(Glu) + AMP + diphosphate. Functionally, catalyzes the attachment of glutamate to tRNA(Glu) in a two-step reaction: glutamate is first activated by ATP to form Glu-AMP and then transferred to the acceptor end of tRNA(Glu). This is Glutamate--tRNA ligase from Synechococcus elongatus (strain ATCC 33912 / PCC 7942 / FACHB-805) (Anacystis nidulans R2).